The following is a 470-amino-acid chain: Alpha-1A adrenergic receptor (470 aa).

At 1-27 (MTPSSVTLNCSNCSHVLAPELNTVKAV) the chain is on the extracellular side. 2 N-linked (GlcNAc...) asparagine glycosylation sites follow: Asn9 and Asn12. Residues 28–51 (VLGMVLGIFILFGVIGNILVILSV) traverse the membrane as a helical segment. Topologically, residues 52–64 (VCHRHLQTVTYYF) are cytoplasmic. A helical transmembrane segment spans residues 65 to 88 (IVNLAVADLLLSSTVLPFSAIFEI). The Extracellular segment spans residues 89-99 (LDRWVFGRVFC). Cys99 and Cys176 form a disulfide bridge. A helical transmembrane segment spans residues 100 to 122 (NIWAAVDVLCCTASIMSLCVISV). Over 123 to 143 (DRYIGVSYPLRYPAIMTKRRA) the chain is Cytoplasmic. Residues 144 to 167 (LLAVMLLWVLSVIISIGPLFGWKE) form a helical membrane-spanning segment. Topologically, residues 168–181 (PAPEDETVCKITEE) are extracellular. Residues 182–205 (PGYAIFSAVGSFYLPLAIILAMYC) form a helical membrane-spanning segment. At 206–271 (RVYVVAQKES…FSREKKAAKT (66 aa)) the chain is on the cytoplasmic side. Residues 272-295 (LGIVVGCFVLCWLPFFLVLPIGSI) traverse the membrane as a helical segment. Over 296–303 (FPAYRPSD) the chain is Extracellular. A helical transmembrane segment spans residues 304-327 (TVFKITFWLGYFNSCINPIIYLCS). The Cytoplasmic portion of the chain corresponds to 328-470 (NQEFKKAFQS…LSLSEKGESV (143 aa)). A lipid anchor (S-palmitoyl cysteine) is attached at Cys343. The tract at residues 375–416 (GAPCRLSPSSSVALSRTPSSRDSREWRVFSGGPINSGPGPTE) is disordered. Residues 381-392 (SPSSSVALSRTP) are compositionally biased toward polar residues.

Belongs to the G-protein coupled receptor 1 family. Adrenergic receptor subfamily. ADRA1A sub-subfamily.

The protein localises to the cell membrane. Functionally, this alpha-adrenergic receptor mediates its action by association with G proteins that activate a phosphatidylinositol-calcium second messenger system. The chain is Alpha-1A adrenergic receptor (adra1a) from Oryzias latipes (Japanese rice fish).